The following is a 957-amino-acid chain: Receptor-like protein 53 (957 aa).

The N-terminal stretch at 1 to 30 is a signal peptide; that stretch reads MEGFWNSKSIIRITLSFIFLFICHFLDVLA. Residues 31 to 910 are Extracellular-facing; that stretch reads APTRNLCRPE…EEEDEDLISW (880 aa). N78, N114, N143, N167, and N191 each carry an N-linked (GlcNAc...) asparagine glycan. LRR repeat units follow at residues 120–143, 144–170, 172–192, 193–216, 217–240, 241–266, 268–287, 288–312, 313–336, 338–360, 361–384, and 386–409; these read LHFL…SIEN, LSHL…NLSR, TYLN…ICNL, SHLT…IGGL, SHLT…IGNL, SNLT…NLSQ, TFLG…SFGN, LNQL…LLNL, TGLS…ITSL, NLMD…LFTI, PSLT…NISS, and SNLY…ISKL. N-linked (GlcNAc...) asparagine glycosylation is found at N239, N242, N252, and N263. N-linked (GlcNAc...) asparagine glycans are attached at residues N311 and N332. N381 carries an N-linked (GlcNAc...) asparagine glycan. The stretch at 412 to 433 is one LRR 13; degenerate repeat; it reads LFRLDISHLNTQGPVDFSIFSH. 16 LRR repeats span residues 434–458, 460–483, 486–509, 510–533, 535–556, 558–580, 581–604, 605–629, 631–651, 652–674, 675–697, 698–721, 765–789, 790–813, 814–837, and 839–862; these read LKSL…YFLS, FKRL…SVSD, SQLI…VRTQ, HELG…LWRL, ILYY…SKPE, SLLY…ICGL, RSLN…MGHL, KSTL…IFEI, RSLD…LSFF, STLE…WLSS, LPKL…EATF, PELR…YFVK, LTIY…IGLL, KELL…MGNL, TALE…LGDL, and FLAY…QFLT. N-linked (GlcNAc...) asparagine glycosylation is found at N441, N446, and N477. Residues N540 and N543 are each glycosylated (N-linked (GlcNAc...) asparagine). The N-linked (GlcNAc...) asparagine glycan is linked to N594. N-linked (GlcNAc...) asparagine glycosylation is present at N665. N711 carries an N-linked (GlcNAc...) asparagine glycan. A glycan (N-linked (GlcNAc...) asparagine) is linked at N812. N-linked (GlcNAc...) asparagine glycosylation is found at N844 and N864. The helical transmembrane segment at 911-931 threads the bilayer; the sequence is IAAAIGFGPGIAFGLMFGYIL. The Cytoplasmic segment spans residues 932–957; the sequence is VSYKPEWFMNPFDRNNRRQKRHKTTH.

Belongs to the RLP family.

The protein localises to the cell membrane. The protein is Receptor-like protein 53 of Arabidopsis thaliana (Mouse-ear cress).